The sequence spans 315 residues: tRNA dimethylallyltransferase (315 aa).

Residue 13–20 participates in ATP binding; it reads GPTASGKS. Residue 15–20 participates in substrate binding; sequence TASGKS. Interaction with substrate tRNA stretches follow at residues 38-41 and 162-166; these read DSMQ and QRLAR.

Belongs to the IPP transferase family. Monomer. Mg(2+) serves as cofactor.

It catalyses the reaction adenosine(37) in tRNA + dimethylallyl diphosphate = N(6)-dimethylallyladenosine(37) in tRNA + diphosphate. In terms of biological role, catalyzes the transfer of a dimethylallyl group onto the adenine at position 37 in tRNAs that read codons beginning with uridine, leading to the formation of N6-(dimethylallyl)adenosine (i(6)A). This Paramagnetospirillum magneticum (strain ATCC 700264 / AMB-1) (Magnetospirillum magneticum) protein is tRNA dimethylallyltransferase.